We begin with the raw amino-acid sequence, 754 residues long: Phosphoribosylformylglycinamidine synthase subunit PurL (754 aa).

Residues 1–21 (MLDTVEHAATTPDQPQPYGEL) are disordered. Residue His54 is part of the active site. Positions 57 and 101 each coordinate ATP. Glu103 serves as a coordination point for Mg(2+). Substrate-binding positions include 104–107 (SHNH) and Arg126. His105 acts as the Proton acceptor in catalysis. Asp127 contacts Mg(2+). Residue Gln252 participates in substrate binding. A Mg(2+)-binding site is contributed by Asp280. 324–326 (ESQ) contacts substrate. ATP-binding residues include Asn512 and Gly549. A Mg(2+)-binding site is contributed by Asn550. A substrate-binding site is contributed by Ser552.

This sequence belongs to the FGAMS family. As to quaternary structure, monomer. Part of the FGAM synthase complex composed of 1 PurL, 1 PurQ and 2 PurS subunits.

The protein localises to the cytoplasm. The enzyme catalyses N(2)-formyl-N(1)-(5-phospho-beta-D-ribosyl)glycinamide + L-glutamine + ATP + H2O = 2-formamido-N(1)-(5-O-phospho-beta-D-ribosyl)acetamidine + L-glutamate + ADP + phosphate + H(+). It functions in the pathway purine metabolism; IMP biosynthesis via de novo pathway; 5-amino-1-(5-phospho-D-ribosyl)imidazole from N(2)-formyl-N(1)-(5-phospho-D-ribosyl)glycinamide: step 1/2. Its function is as follows. Part of the phosphoribosylformylglycinamidine synthase complex involved in the purines biosynthetic pathway. Catalyzes the ATP-dependent conversion of formylglycinamide ribonucleotide (FGAR) and glutamine to yield formylglycinamidine ribonucleotide (FGAM) and glutamate. The FGAM synthase complex is composed of three subunits. PurQ produces an ammonia molecule by converting glutamine to glutamate. PurL transfers the ammonia molecule to FGAR to form FGAM in an ATP-dependent manner. PurS interacts with PurQ and PurL and is thought to assist in the transfer of the ammonia molecule from PurQ to PurL. In Mycobacterium bovis (strain ATCC BAA-935 / AF2122/97), this protein is Phosphoribosylformylglycinamidine synthase subunit PurL.